The following is a 475-amino-acid chain: Melanopsin (475 aa).

Residues 1–21 (MGTQHRIKVDVPDRVLYTVGS) lie on the Extracellular side of the membrane. Residues 22-42 (CVLVIGSIGITGNLLVLYAFY) traverse the membrane as a helical segment. The Cytoplasmic portion of the chain corresponds to 43–53 (SNKRLRTPANY). The helical transmembrane segment at 54–74 (FIMNLAASDFLMSATQAPICF) threads the bilayer. At 75–90 (LNSMHTEWILGDIGCN) the chain is on the extracellular side. Cysteines 89 and 167 form a disulfide. A helical transmembrane segment spans residues 91-111 (FYVFCGALFGITSMMTLLAIS). Residues 112–134 (VDRYCVITKPLQSIKRSSKKRSC) are Cytoplasmic-facing. The helical transmembrane segment at 135 to 155 (IIIAFVWLYSLGWSVCPLFGW) threads the bilayer. Residues 156-187 (SSYIPEGLMISCTWDYVSYSPANRSYTMMLCC) lie on the Extracellular side of the membrane. N-linked (GlcNAc...) asparagine glycosylation occurs at Asn178. A helical transmembrane segment spans residues 188-208 (FVFFIPLIIIFHCYLFMFLAI). The Cytoplasmic segment spans residues 209–240 (RSTGRNVQKLGSTYNRKSNVSQSVKSEWKLAK). The chain crosses the membrane as a helical span at residues 241 to 261 (IAFVAIVVFVLSWSPYACVTL). Residues 262-276 (IAWAGYAKTLNPYSK) are Extracellular-facing. The chain crosses the membrane as a helical span at residues 277–297 (SVPAVIAKASAIYNPIIYAII). The residue at position 284 (Lys284) is an N6-(retinylidene)lysine. At 298–475 (HPRYRRTIRS…EQHQMEASSH (178 aa)) the chain is on the cytoplasmic side. Disordered regions lie at residues 370 to 390 (VEAARKKQQPHRSRSFSKQAE) and 445 to 475 (PFGLNSSSTEENADTSDMEVQEQHQMEASSH). The span at 375–384 (KKQQPHRSRS) shows a compositional bias: basic residues. Residues 445 to 454 (PFGLNSSSTE) show a composition bias toward polar residues. Residues 455 to 464 (ENADTSDMEV) are compositionally biased toward acidic residues. Residues 465–475 (QEQHQMEASSH) show a composition bias toward basic and acidic residues.

It belongs to the G-protein coupled receptor 1 family. Opsin subfamily. As to expression, highest level in the lateral eye. Low level in the brain.

It localises to the cell membrane. Its function is as follows. Photoreceptor implicated in non-image-forming responses to light. May be able to isomerize covalently bound all-trans retinal back to 11-cis retinal. The polypeptide is Melanopsin (OPN4) (Podarcis siculus (Italian wall lizard)).